Reading from the N-terminus, the 188-residue chain is Crossover junction endodeoxyribonuclease RuvC (188 aa).

Active-site residues include Asp7, Glu68, and Asp141. Mg(2+) is bound by residues Asp7, Glu68, and Asp141.

This sequence belongs to the RuvC family. As to quaternary structure, homodimer which binds Holliday junction (HJ) DNA. The HJ becomes 2-fold symmetrical on binding to RuvC with unstacked arms; it has a different conformation from HJ DNA in complex with RuvA. In the full resolvosome a probable DNA-RuvA(4)-RuvB(12)-RuvC(2) complex forms which resolves the HJ. Mg(2+) serves as cofactor.

It is found in the cytoplasm. It catalyses the reaction Endonucleolytic cleavage at a junction such as a reciprocal single-stranded crossover between two homologous DNA duplexes (Holliday junction).. Its function is as follows. The RuvA-RuvB-RuvC complex processes Holliday junction (HJ) DNA during genetic recombination and DNA repair. Endonuclease that resolves HJ intermediates. Cleaves cruciform DNA by making single-stranded nicks across the HJ at symmetrical positions within the homologous arms, yielding a 5'-phosphate and a 3'-hydroxyl group; requires a central core of homology in the junction. The consensus cleavage sequence is 5'-(A/T)TT(C/G)-3'. Cleavage occurs on the 3'-side of the TT dinucleotide at the point of strand exchange. HJ branch migration catalyzed by RuvA-RuvB allows RuvC to scan DNA until it finds its consensus sequence, where it cleaves and resolves the cruciform DNA. In Mycobacterium avium (strain 104), this protein is Crossover junction endodeoxyribonuclease RuvC.